The primary structure comprises 194 residues: Molybdenum cofactor guanylyltransferase (194 aa).

Residues 12 to 14, K25, D71, and D101 each bind GTP; that span reads LAG. Residue D101 coordinates Mg(2+).

It belongs to the MobA family. As to quaternary structure, monomer. It depends on Mg(2+) as a cofactor.

The protein localises to the cytoplasm. It carries out the reaction Mo-molybdopterin + GTP + H(+) = Mo-molybdopterin guanine dinucleotide + diphosphate. Transfers a GMP moiety from GTP to Mo-molybdopterin (Mo-MPT) cofactor (Moco or molybdenum cofactor) to form Mo-molybdopterin guanine dinucleotide (Mo-MGD) cofactor. The protein is Molybdenum cofactor guanylyltransferase of Salmonella typhimurium (strain LT2 / SGSC1412 / ATCC 700720).